Consider the following 134-residue polypeptide: Fluoride-specific ion channel FluC 2 (134 aa).

4 consecutive transmembrane segments (helical) span residues 8–28 (IVAIGIGGAIGTSFRFLLNTW), 40–60 (IENIVGSFLLGFLTSWFLVIV), 69–89 (LGVGLCGGFTTMSTLAADSVL), and 99–119 (LIYVAASLFGGIGFALLGYLL). Na(+) contacts are provided by Gly-75 and Thr-78.

It belongs to the fluoride channel Fluc/FEX (TC 1.A.43) family.

The protein localises to the cell membrane. The enzyme catalyses fluoride(in) = fluoride(out). Its activity is regulated as follows. Na(+) is not transported, but it plays an essential structural role and its presence is essential for fluoride channel function. Fluoride-specific ion channel. Important for reducing fluoride concentration in the cell, thus reducing its toxicity. This is Fluoride-specific ion channel FluC 2 from Halalkalibacterium halodurans (strain ATCC BAA-125 / DSM 18197 / FERM 7344 / JCM 9153 / C-125) (Bacillus halodurans).